Reading from the N-terminus, the 176-residue chain is Trypsin inhibitor 1B (176 aa).

Cystine bridges form between Cys39/Cys83 and Cys132/Cys143.

The protein belongs to the protease inhibitor I3 (leguminous Kunitz-type inhibitor) family.

Inhibits trypsin stoichiometrically. This Erythrina variegata (Indian coral tree) protein is Trypsin inhibitor 1B.